The chain runs to 2038 residues: Non-reducing polyketide synthase ZEA1 (2038 aa).

The segment at L9 to H246 is N-terminal acylcarrier protein transacylase domain (SAT). The 431-residue stretch at P364 to D794 folds into the Ketosynthase family 3 (KS3) domain. Catalysis depends on for beta-ketoacyl synthase activity residues C537, H672, and H711. Residues V888–L1172 form a malonyl-CoA:ACP transacylase (MAT) domain region. Catalysis depends on S979, which acts as the For acyl/malonyl transferase activity. The product template (PT) domain stretch occupies residues S1221 to L1572. An N-terminal hotdog fold region spans residues H1254 to K1405. The 320-residue stretch at H1254–D1573 folds into the PKS/mFAS DH domain. The C-terminal hotdog fold stretch occupies residues I1425–D1573. In terms of domain architecture, Carrier spans Q1616–S1693. S1653 carries the post-translational modification O-(pantetheine 4'-phosphoryl)serine. The tract at residues N1700–S1738 is disordered. Over residues D1709–G1737 the composition is skewed to polar residues. Positions T1778–N1882 are thioesterase (TE) domain. H2021 acts as the For thioesterase activity in catalysis.

It functions in the pathway mycotoxin biosynthesis. Functionally, non-reducing polyketide synthase; part of the gene cluster that mediates the biosynthesis of zearalenone (ZEA), a nonsteroid estrogen that is a contaminant of cereal grains and causes estrogenic disorders in humans and animals. The ZEA backbone is synthesized from a single acetyl-CoA molecule and eight malonyl-CoA molecules. The reducing polyketide synthase ZEA2 is proposed to synthesize a reduced hexaketide intermediate by using different combinations of its reductive domains during each round of condensation. The hexaketide thioester is then transacylated to the non-reducing polyketide synthase ZEA1 and is further condensed with three malonyl-CoAs without reductive tailoring to yield a mixed reduced/unreduced nonaketide. ZEA1 must be able to interact with ZEA2 to facilitate starter-unit acyltransfer and initiate polyketide biosynthesis. ZEA1 also mediates the required C2-C7 cyclization to form the resorcylate core and catalyzes the formation of the macrolactone. ZEA1 exhibits broad starter-unit specificities toward fatty acyl-CoAs ranging in sizes between C6 and C16 and displays the highest activity toward decanoyl-CoA. ZEB1 is then responsible for the chemical conversion of beta-zearalenonol (beta-ZOL) to ZEA in the biosynthetic pathway. The polypeptide is Non-reducing polyketide synthase ZEA1 (Gibberella zeae (strain ATCC MYA-4620 / CBS 123657 / FGSC 9075 / NRRL 31084 / PH-1) (Wheat head blight fungus)).